The sequence spans 326 residues: 3-methyl-2-oxobutanoate hydroxymethyltransferase 1 (326 aa).

Mg(2+)-binding residues include Asp-52, Asp-91, and Glu-122. Residues 52 to 53 (DS) and Asp-91 contribute to the 3-methyl-2-oxobutanoate site. The active-site Proton acceptor is the Glu-189.

This sequence belongs to the PanB family. As to quaternary structure, homodecamer; pentamer of dimers. The cofactor is Mg(2+).

It is found in the cytoplasm. It carries out the reaction 3-methyl-2-oxobutanoate + (6R)-5,10-methylene-5,6,7,8-tetrahydrofolate + H2O = 2-dehydropantoate + (6S)-5,6,7,8-tetrahydrofolate. It functions in the pathway cofactor biosynthesis; (R)-pantothenate biosynthesis; (R)-pantoate from 3-methyl-2-oxobutanoate: step 1/2. Catalyzes the reversible reaction in which hydroxymethyl group from 5,10-methylenetetrahydrofolate is transferred onto alpha-ketoisovalerate to form ketopantoate. In Bradyrhizobium diazoefficiens (strain JCM 10833 / BCRC 13528 / IAM 13628 / NBRC 14792 / USDA 110), this protein is 3-methyl-2-oxobutanoate hydroxymethyltransferase 1.